Reading from the N-terminus, the 368-residue chain is Histidinol-phosphate aminotransferase (368 aa).

Lys-215 carries the post-translational modification N6-(pyridoxal phosphate)lysine.

This sequence belongs to the class-II pyridoxal-phosphate-dependent aminotransferase family. Histidinol-phosphate aminotransferase subfamily. Homodimer. Pyridoxal 5'-phosphate is required as a cofactor.

The enzyme catalyses L-histidinol phosphate + 2-oxoglutarate = 3-(imidazol-4-yl)-2-oxopropyl phosphate + L-glutamate. Its pathway is amino-acid biosynthesis; L-histidine biosynthesis; L-histidine from 5-phospho-alpha-D-ribose 1-diphosphate: step 7/9. In Buchnera aphidicola subsp. Acyrthosiphon pisum (strain APS) (Acyrthosiphon pisum symbiotic bacterium), this protein is Histidinol-phosphate aminotransferase (hisC).